The primary structure comprises 239 residues: Isopentenyl-diphosphate Delta-isomerase (239 aa).

Substrate is bound at residue Lys43. His47 and His58 together coordinate Mg(2+). The region spanning 56–210 (LLHRAFSIFL…KVKVTPWFRL (155 aa)) is the Nudix hydrolase domain. Positions 77 and 81 each coordinate substrate. The active site involves Cys93. Ser94 contacts substrate. Mg(2+) is bound by residues Glu156 and Glu158. Residue Glu158 is part of the active site.

Belongs to the IPP isomerase type 1 family. Mg(2+) is required as a cofactor.

It catalyses the reaction isopentenyl diphosphate = dimethylallyl diphosphate. Its pathway is isoprenoid biosynthesis; dimethylallyl diphosphate biosynthesis; dimethylallyl diphosphate from isopentenyl diphosphate: step 1/1. Catalyzes the 1,3-allylic rearrangement of the homoallylic substrate isopentenyl (IPP) to its highly electrophilic allylic isomer, dimethylallyl diphosphate (DMAPP). This Dictyostelium discoideum (Social amoeba) protein is Isopentenyl-diphosphate Delta-isomerase (ipi).